Consider the following 100-residue polypeptide: Small ribosomal subunit protein uS14c (100 aa).

This sequence belongs to the universal ribosomal protein uS14 family. Part of the 30S ribosomal subunit.

The protein localises to the plastid. It is found in the chloroplast. Binds 16S rRNA, required for the assembly of 30S particles. In Nasturtium officinale (Watercress), this protein is Small ribosomal subunit protein uS14c.